A 126-amino-acid chain; its full sequence is Probable S-adenosyl-L-methionine-binding protein MJ1583 (126 aa).

Residues 4 to 126 (LKPIGVVEQN…FSEKLDCPKI (123 aa)) enclose the TsaA-like domain. S-adenosyl-L-methionine contacts are provided by residues 45–46 (HK), Arg-75, and 106–109 (YNET).

Belongs to the tRNA methyltransferase O family.

The chain is Probable S-adenosyl-L-methionine-binding protein MJ1583 from Methanocaldococcus jannaschii (strain ATCC 43067 / DSM 2661 / JAL-1 / JCM 10045 / NBRC 100440) (Methanococcus jannaschii).